Here is a 241-residue protein sequence, read N- to C-terminus: Histidine-rich protein PFHRP-III (241 aa).

An N-terminal signal peptide occupies residues 1-21 (MVSFSKNKVLSAAVFASVLLL). Basic and acidic residues predominate over residues 52 to 76 (AHAGDAHHAHHVADAHHAHHVADAH). 2 disordered regions span residues 52-145 (AHAG…ANAH) and 195-241 (AHHD…HLHH). Low complexity predominate over residues 84–145 (AHHAANAHHA…ANAHHAANAH (62 aa)). Basic and acidic residues predominate over residues 195–231 (AHHDGAHHDDAHHDGAHHDDAHHDGAHHDGAHHDGAH).

This chain is Histidine-rich protein PFHRP-III, found in Plasmodium falciparum.